A 250-amino-acid polypeptide reads, in one-letter code: Myelin basic protein (250 aa).

The span at 1 to 28 (MGNHSGKRELSAEKASKDGEIHRGEAGK) shows a compositional bias: basic and acidic residues. Positions 1 to 150 (MGNHSGKREL…SQRSKYLATA (150 aa)) are disordered. The residue at position 2 (glycine 2) is an N-acetylalanine. Phosphoserine occurs at positions 31 and 40. The span at 95–113 (FSRDAPGREDNTFKDRPSE) shows a compositional bias: basic and acidic residues. Residue serine 96 is modified to Phosphothreonine. Residue glutamate 113 is modified to Phosphoserine. At glutamate 122 the chain carries Phosphothreonine. At threonine 125 the chain carries Phosphotyrosine. A phosphoserine mark is found at alanine 135, arginine 139, serine 141, and serine 144. A phosphotyrosine mark is found at tyrosine 146 and leucine 147. Threonine 149 is subject to Phosphothreonine. Phosphoserine is present on serine 151. Phosphotyrosine is present on serine 151. Threonine 152 carries the post-translational modification Phosphothreonine. Citrulline is present on residues arginine 157 and arginine 163. Position 167 is a phosphothreonine (threonine 167). Serine 172 is modified (phosphoserine). Omega-N-methylarginine occurs at positions 175 and 181. The tract at residues 175–250 (RFFSGDRGAP…SRSGSPMARR (76 aa)) is disordered. The residue at position 188 (serine 188) is a Phosphoserine. Threonine 197 carries the post-translational modification Phosphothreonine. The segment covering 197 to 206 (THYGSLPQKS) has biased composition (polar residues). Tyrosine 199 is modified (phosphotyrosine). The residue at position 206 (serine 206) is a Phosphoserine. Threonine 211, threonine 226, and threonine 229 each carry phosphothreonine. Glutamine 234 is modified (deamidated glutamine). Arginine 239 carries the post-translational modification Citrulline. Serine 241 is subject to Phosphoserine. The residue at position 245 (serine 245) is a Phosphoserine; by UHMK1. The residue at position 250 (arginine 250) is a Citrulline.

It belongs to the myelin basic protein family. As to quaternary structure, homodimer. Post-translationally, as in other animals, several charge isomers may be produced as a result of optional post-translational modifications, such as phosphorylation of serine or threonine residues, deamidation of glutamine or asparagine residues, citrullination and methylation of arginine residues. In terms of processing, methylated on arginine residues; decreases with the age of the animal, making MBP more cationic. Phosphorylated by TAOK2, VRK2, MAPK11, MAPK12, MAPK14 and MINK1. Post-translationally, proteolytically cleaved in B cell lysosomes by cathepsin CTSG which degrades the major immunogenic MBP epitope and prevents the activation of MBP-specific autoreactive T cells. In the embryo, isoform 1-isoform 3 are found in neurons within the central nervous system (primarily in pioneer neurons important in the formation of the cortex) and the peripheral nervous system. They are also expressed in the thymus, gut, lung and kidney. In the adult, isoform 1-isoform 3 are highly expressed in the brain (mainly in brain regions rich in oligodendrocytes) and spleen. Lower levels are seen in the heart, kidney and lung. Isoform 2 is also found in cells of the immune system. The isoforms missing the 134 first amino acids (isoform 4-isoform 13) are almost exclusively produced in the myelin-forming cells, the mature oligodendrocytes.

It is found in the myelin membrane. The protein localises to the cytoplasm. It localises to the nucleus. Its function is as follows. The classic group of MBP isoforms (isoform 4-isoform 13) are with PLP the most abundant protein components of the myelin membrane in the CNS. They have a role in both its formation and stabilization. The non-classic group of MBP isoforms (isoform 1-isoform 3/Golli-MBPs) may preferentially have a role in the early developing brain long before myelination, maybe as components of transcriptional complexes, and may also be involved in signaling pathways in T-cells and neural cells. Differential splicing events combined to optional post-translational modifications give a wide spectrum of isomers, with each of them potentially having a specialized function. This Mus musculus (Mouse) protein is Myelin basic protein (Mbp).